The chain runs to 142 residues: Transcriptional regulator MraZ (142 aa).

SpoVT-AbrB domains follow at residues Glu5–Glu48 and Ala77–Thr120.

The protein belongs to the MraZ family. As to quaternary structure, forms oligomers.

It localises to the cytoplasm. The protein resides in the nucleoid. In Dehalococcoides mccartyi (strain ATCC BAA-2100 / JCM 16839 / KCTC 5957 / BAV1), this protein is Transcriptional regulator MraZ.